A 356-amino-acid chain; its full sequence is Leucine-rich repeat and transmembrane domain-containing protein 1 (356 aa).

Residues 1–32 (MLNEGLCCGAWAMKGTLLLVSSVGLLLPGVGS) form the signal peptide. Residues 33–62 (CPMKCLCHPSSNSVDCSGQGLSKVPRDLPP) enclose the LRRNT domain. The Extracellular portion of the chain corresponds to 33–299 (CPMKCLCHPS…PTNLRHAVAT (267 aa)). 5 LRR repeats span residues 63–84 (WTVTLLLQDNRIHWLPALAFQS), 87–108 (LLSTLNLSNNSLSNLAAEAFYG), 111–132 (HLRVLNVTQNSLLSIESSFAHA), 135–156 (GLRELDLSSNSLRILPTSLGKP), and 159–180 (NLTVFAVQQNHLLHLDRELLEA). Residues Asn92 and Asn116 are each glycosylated (N-linked (GlcNAc...) asparagine). N-linked (GlcNAc...) asparagine glycosylation occurs at Asn159. Residues 192–246 (NPWICDCHLLGLKLWLERFTFQGGETDGAICRLPEPWQGKALLSIPHELYQPCSL) form the LRRCT domain. A compositionally biased stretch (polar residues) spans 255–277 (LVQQPGSAPQDAQKSHENSSGQQ). Residues 255 to 288 (LVQQPGSAPQDAQKSHENSSGQQDPLECEAKPKP) form a disordered region. Residues 300 to 320 (VVITGVVCGIVCLMMLAAAIY) traverse the membrane as a helical segment. Residues 321-356 (GCTYAAITAQYQGRPLASARKSEKMGSKELMDSSSA) lie on the Cytoplasmic side of the membrane.

Its subcellular location is the membrane. The protein is Leucine-rich repeat and transmembrane domain-containing protein 1 (Lrtm1) of Mus musculus (Mouse).